Reading from the N-terminus, the 372-residue chain is Chaperone protein DnaJ (372 aa).

In terms of domain architecture, J spans 5–70 (DYYDLLEVGR…EKRAGYDRYG (66 aa)). Residues 134–212 (GIQAPIHYVT…CGGSGRRRDE (79 aa)) form a CR-type zinc finger. The Zn(2+) site is built by Cys-147, Cys-150, Cys-164, Cys-167, Cys-186, Cys-189, Cys-200, and Cys-203. CXXCXGXG motif repeat units lie at residues 147 to 154 (CDTCQGTG), 164 to 171 (CHTCQGSG), 186 to 193 (CTTCYGEG), and 200 to 207 (CKKCGGSG).

This sequence belongs to the DnaJ family. As to quaternary structure, homodimer. The cofactor is Zn(2+).

The protein resides in the cytoplasm. In terms of biological role, participates actively in the response to hyperosmotic and heat shock by preventing the aggregation of stress-denatured proteins and by disaggregating proteins, also in an autonomous, DnaK-independent fashion. Unfolded proteins bind initially to DnaJ; upon interaction with the DnaJ-bound protein, DnaK hydrolyzes its bound ATP, resulting in the formation of a stable complex. GrpE releases ADP from DnaK; ATP binding to DnaK triggers the release of the substrate protein, thus completing the reaction cycle. Several rounds of ATP-dependent interactions between DnaJ, DnaK and GrpE are required for fully efficient folding. Also involved, together with DnaK and GrpE, in the DNA replication of plasmids through activation of initiation proteins. This is Chaperone protein DnaJ from Wolbachia sp. subsp. Drosophila simulans (strain wRi).